Reading from the N-terminus, the 85-residue chain is Small ribosomal subunit protein uS17 (85 aa).

This sequence belongs to the universal ribosomal protein uS17 family. As to quaternary structure, part of the 30S ribosomal subunit.

Its function is as follows. One of the primary rRNA binding proteins, it binds specifically to the 5'-end of 16S ribosomal RNA. This is Small ribosomal subunit protein uS17 from Agathobacter rectalis (strain ATCC 33656 / DSM 3377 / JCM 17463 / KCTC 5835 / VPI 0990) (Eubacterium rectale).